The primary structure comprises 523 residues: 2-isopropylmalate synthase (523 aa).

The Pyruvate carboxyltransferase domain maps to 5–267; sequence VIIFDTTLRD…HTNINHHEIW (263 aa). Mn(2+) is bound by residues Asp14, His202, His204, and Asn238. The segment at 392–523 is regulatory domain; sequence RLDYFSVQSG…QNKENNKETV (132 aa).

It belongs to the alpha-IPM synthase/homocitrate synthase family. LeuA type 1 subfamily. Homodimer. It depends on Mn(2+) as a cofactor.

The protein localises to the cytoplasm. It catalyses the reaction 3-methyl-2-oxobutanoate + acetyl-CoA + H2O = (2S)-2-isopropylmalate + CoA + H(+). Its pathway is amino-acid biosynthesis; L-leucine biosynthesis; L-leucine from 3-methyl-2-oxobutanoate: step 1/4. Catalyzes the condensation of the acetyl group of acetyl-CoA with 3-methyl-2-oxobutanoate (2-ketoisovalerate) to form 3-carboxy-3-hydroxy-4-methylpentanoate (2-isopropylmalate). The chain is 2-isopropylmalate synthase from Salmonella newport (strain SL254).